A 351-amino-acid chain; its full sequence is Phosphate acyltransferase (351 aa).

The protein belongs to the PlsX family. As to quaternary structure, homodimer. Probably interacts with PlsY.

Its subcellular location is the cytoplasm. It catalyses the reaction a fatty acyl-[ACP] + phosphate = an acyl phosphate + holo-[ACP]. The protein operates within lipid metabolism; phospholipid metabolism. Functionally, catalyzes the reversible formation of acyl-phosphate (acyl-PO(4)) from acyl-[acyl-carrier-protein] (acyl-ACP). This enzyme utilizes acyl-ACP as fatty acyl donor, but not acyl-CoA. The chain is Phosphate acyltransferase from Verminephrobacter eiseniae (strain EF01-2).